The following is a 321-amino-acid chain: Tetraketide alpha-pyrone reductase 2 (321 aa).

Position 2 is an N-acetylserine (Ser-2). Residues Tyr-4–Val-28, Lys-40, and Tyr-160 contribute to the NADP(+) site.

It belongs to the NAD(P)-dependent epimerase/dehydratase family. Dihydroflavonol-4-reductase subfamily.

It is found in the cytoplasm. In terms of biological role, may be involved in the biosynthesis of hydroxylated tetraketide compounds that serve as sporopollenin precursors (the main constituents of exine). Acts on tetraketide alpha-pyrones and reduces the carbonyl function on the tetraketide alkyl chain to a secondary alcohol function. This is Tetraketide alpha-pyrone reductase 2 (TKPR2) from Arabidopsis thaliana (Mouse-ear cress).